The chain runs to 190 residues: Orotate phosphoribosyltransferase (190 aa).

5-phospho-alpha-D-ribose 1-diphosphate is bound by residues R101, K102, K105, H107, and 128 to 136; that span reads EDVVTTGGS. T132 and R160 together coordinate orotate.

The protein belongs to the purine/pyrimidine phosphoribosyltransferase family. PyrE subfamily. In terms of assembly, homodimer. It depends on Mg(2+) as a cofactor.

The catalysed reaction is orotidine 5'-phosphate + diphosphate = orotate + 5-phospho-alpha-D-ribose 1-diphosphate. It participates in pyrimidine metabolism; UMP biosynthesis via de novo pathway; UMP from orotate: step 1/2. Catalyzes the transfer of a ribosyl phosphate group from 5-phosphoribose 1-diphosphate to orotate, leading to the formation of orotidine monophosphate (OMP). The chain is Orotate phosphoribosyltransferase from Synechococcus sp. (strain CC9605).